The following is a 553-amino-acid chain: Glutamyl-tRNA(Gln) amidotransferase subunit B, mitochondrial (553 aa).

The transit peptide at methionine 1–tyrosine 18 directs the protein to the mitochondrion.

Belongs to the GatB/GatE family. GatB subfamily. As to quaternary structure, subunit of the heterotrimeric GatCAB amidotransferase (AdT) complex, composed of A (qrsl1), B (gatb) and C (gatc) subunits.

It localises to the mitochondrion. The enzyme catalyses L-glutamyl-tRNA(Gln) + L-glutamine + ATP + H2O = L-glutaminyl-tRNA(Gln) + L-glutamate + ADP + phosphate + H(+). Its function is as follows. Allows the formation of correctly charged Gln-tRNA(Gln) through the transamidation of misacylated Glu-tRNA(Gln) in the mitochondria. The reaction takes place in the presence of glutamine and ATP through an activated gamma-phospho-Glu-tRNA(Gln). The chain is Glutamyl-tRNA(Gln) amidotransferase subunit B, mitochondrial from Danio rerio (Zebrafish).